A 126-amino-acid chain; its full sequence is Probable 4-amino-4-deoxy-L-arabinose-phosphoundecaprenol flippase subunit ArnF (126 aa).

The chain crosses the membrane as a helical span at residues 1-21 (MGFLWALFSVGLVSAAQLLLR). The Periplasmic segment spans residues 22–47 (SAMVALPPLTDIVAFLQHLLHFQPGT). The helical transmembrane segment at 48 to 68 (VGLFFGLLGYLLSMVCWYFAL) threads the bilayer. The Cytoplasmic segment spans residues 69–76 (HRLPLSKA). Residues 77-97 (YALLSLSYILVWAAAIWLPGW) traverse the membrane as a helical segment. The Periplasmic portion of the chain corresponds to 98–100 (HEP). A helical transmembrane segment spans residues 101 to 121 (FYWQSLLGVTIIVAGVLTIFW). At 122–126 (PVKRR) the chain is on the cytoplasmic side.

This sequence belongs to the ArnF family. Heterodimer of ArnE and ArnF.

It localises to the cell inner membrane. Its pathway is bacterial outer membrane biogenesis; lipopolysaccharide biosynthesis. Its function is as follows. Translocates 4-amino-4-deoxy-L-arabinose-phosphoundecaprenol (alpha-L-Ara4N-phosphoundecaprenol) from the cytoplasmic to the periplasmic side of the inner membrane. The sequence is that of Probable 4-amino-4-deoxy-L-arabinose-phosphoundecaprenol flippase subunit ArnF from Klebsiella pneumoniae (strain 342).